The primary structure comprises 284 residues: ATP synthase gamma chain (284 aa).

The protein belongs to the ATPase gamma chain family. F-type ATPases have 2 components, CF(1) - the catalytic core - and CF(0) - the membrane proton channel. CF(1) has five subunits: alpha(3), beta(3), gamma(1), delta(1), epsilon(1). CF(0) has three main subunits: a, b and c.

The protein localises to the cell membrane. Functionally, produces ATP from ADP in the presence of a proton gradient across the membrane. The gamma chain is believed to be important in regulating ATPase activity and the flow of protons through the CF(0) complex. In Pelotomaculum thermopropionicum (strain DSM 13744 / JCM 10971 / SI), this protein is ATP synthase gamma chain.